The primary structure comprises 281 residues: NADH-cytochrome b5 reductase 1 (281 aa).

A helical membrane pass occupies residues 2-22 (VPGKFIFTATFVLLCTIIAVV). The region spanning 37–141 (EKLQEFPLVA…RGPKGFYHYQ (105 aa)) is the FAD-binding FR-type domain. FAD is bound by residues 121 to 136 (AQLN…GPKG) and 147 to 179 (EIGM…KVSL).

It belongs to the flavoprotein pyridine nucleotide cytochrome reductase family. As to quaternary structure, monomer. Component of the 2-(3-amino-3-carboxypropyl)histidine synthase complex composed of DPH1, DPH2, DPH3 and a NADH-dependent reductase, predominantly CBR1. The cofactor is FAD.

It is found in the mitochondrion outer membrane. The catalysed reaction is 2 Fe(III)-[cytochrome b5] + NADH = 2 Fe(II)-[cytochrome b5] + NAD(+) + H(+). The enzyme catalyses 2 Fe(3+)-[Dph3] + NADH = 2 Fe(2+)-[Dph3] + NAD(+) + H(+). It functions in the pathway protein modification; peptidyl-diphthamide biosynthesis. Its function is as follows. NADH-dependent reductase for DPH3 and cytochrome b5. Required for the first step of diphthamide biosynthesis, a post-translational modification of histidine which occurs in elongation factor 2. DPH1 and DPH2 transfer a 3-amino-3-carboxypropyl (ACP) group from S-adenosyl-L-methionine (SAM) to a histidine residue, the reaction is assisted by a reduction system comprising DPH3 and a NADH-dependent reductase, predominantly CBR1. By reducing DPH3, also involved in the formation of the tRNA wobble base modification mcm5s 2U (5-methoxycarbonylmethyl-2-thiouridine), mediated by the elongator complex. The cytochrome b5/NADH cytochrome b5 reductase electron transfer system supports the catalytic activity of several sterol biosynthetic enzymes. This Kluyveromyces lactis (strain ATCC 8585 / CBS 2359 / DSM 70799 / NBRC 1267 / NRRL Y-1140 / WM37) (Yeast) protein is NADH-cytochrome b5 reductase 1 (CBR1).